A 163-amino-acid polypeptide reads, in one-letter code: Staphylokinase (163 aa).

A signal peptide spans 1–27 (MLKRSLLFLTVLLLLFSFSSITNEVSA).

Belongs to the staphylokinase family.

It localises to the secreted. Potent plasminogen activator that converts plasminogen into plasmin. It forms a 1:1 complex with plasmin, which in turn activates other plasminogen molecules. The chain is Staphylokinase (sak) from Staphylococcus phage phi13 (Bacteriophage phi-13).